A 151-amino-acid polypeptide reads, in one-letter code: Large ribosomal subunit protein uL15 (151 aa).

The tract at residues 1 to 57 is disordered; sequence MTLRLDSLKANKGARRRKLRKGRGIAAGQGASCGFGMRGQKSRSGRPTRPGFEGGQM. Basic residues predominate over residues 12-23; it reads KGARRRKLRKGR. Residues 25–37 show a composition bias toward gly residues; sequence IAAGQGASCGFGM.

Belongs to the universal ribosomal protein uL15 family. Part of the 50S ribosomal subunit.

Its function is as follows. Binds to the 23S rRNA. This is Large ribosomal subunit protein uL15 from Synechococcus sp. (strain CC9902).